The primary structure comprises 414 residues: Putative dipeptidase ARB_02715 (414 aa).

Positions 1-20 are cleaved as a signal peptide; that stretch reads MAALFVSLLALTSLVPVQGA. Zn(2+)-binding residues include His45, Asp47, and Glu157. A disulfide bond links Cys96 and Cys186. His184 is a substrate binding site. His228 and His249 together coordinate Zn(2+). 2 residues coordinate substrate: Arg260 and Asp320. N-linked (GlcNAc...) asparagine glycosylation is present at Asn392.

It belongs to the metallo-dependent hydrolases superfamily. Peptidase M19 family. It depends on Zn(2+) as a cofactor.

It catalyses the reaction an L-aminoacyl-L-amino acid + H2O = 2 an L-alpha-amino acid. Functionally, hydrolyzes a wide range of dipeptides. In Arthroderma benhamiae (strain ATCC MYA-4681 / CBS 112371) (Trichophyton mentagrophytes), this protein is Putative dipeptidase ARB_02715.